The primary structure comprises 1342 residues: DNA-directed RNA polymerase subunit beta (1342 aa).

Belongs to the RNA polymerase beta chain family. As to quaternary structure, the RNAP catalytic core consists of 2 alpha, 1 beta, 1 beta' and 1 omega subunit. When a sigma factor is associated with the core the holoenzyme is formed, which can initiate transcription.

It catalyses the reaction RNA(n) + a ribonucleoside 5'-triphosphate = RNA(n+1) + diphosphate. Functionally, DNA-dependent RNA polymerase catalyzes the transcription of DNA into RNA using the four ribonucleoside triphosphates as substrates. The chain is DNA-directed RNA polymerase subunit beta from Citrobacter koseri (strain ATCC BAA-895 / CDC 4225-83 / SGSC4696).